We begin with the raw amino-acid sequence, 243 residues long: 1-(5-phosphoribosyl)-5-[(5-phosphoribosylamino)methylideneamino] imidazole-4-carboxamide isomerase (243 aa).

D9 functions as the Proton acceptor in the catalytic mechanism. The active-site Proton donor is the D131.

Belongs to the HisA/HisF family.

It localises to the cytoplasm. The catalysed reaction is 1-(5-phospho-beta-D-ribosyl)-5-[(5-phospho-beta-D-ribosylamino)methylideneamino]imidazole-4-carboxamide = 5-[(5-phospho-1-deoxy-D-ribulos-1-ylimino)methylamino]-1-(5-phospho-beta-D-ribosyl)imidazole-4-carboxamide. Its pathway is amino-acid biosynthesis; L-histidine biosynthesis; L-histidine from 5-phospho-alpha-D-ribose 1-diphosphate: step 4/9. This Campylobacter jejuni (strain RM1221) protein is 1-(5-phosphoribosyl)-5-[(5-phosphoribosylamino)methylideneamino] imidazole-4-carboxamide isomerase.